We begin with the raw amino-acid sequence, 65 residues long: Weak toxin CM-11 (65 aa).

Intrachain disulfides connect Cys3–Cys24, Cys6–Cys11, Cys17–Cys42, Cys46–Cys57, and Cys58–Cys63.

This sequence belongs to the three-finger toxin family. Ancestral subfamily. Orphan group II sub-subfamily. As to expression, expressed by the venom gland.

Its subcellular location is the secreted. Functionally, binds with low affinity to muscular (alpha-1-beta-1-delta-epsilon/CHRNA1-CHRNB1-CHRND-CHRNE) and very low affinity to neuronal (alpha-7/CHRNA7) nicotinic acetylcholine receptor (nAChR). This is Weak toxin CM-11 from Naja haje haje (Egyptian cobra).